A 668-amino-acid polypeptide reads, in one-letter code: MNKFNLVTKYAPAGDQPQAIQSLVNGINTGLQHQVLLGVTGSGKTYTMANVIQQTQKPCLILAHNKTLAAQLYSEFKQYFPDNAVEYFVSYYDYYQPEAYIAASDTYIEKDSSVNEHIEQMRLSATKAILERNDVIIVATVSAIYGLGDPEQYMQMLLHLKVGEELGLKKAQTKLVEMQYSRNDMDFSRGSFRVRGEVLDIFPADSEKDAIRVEFFDDEIEAISVIDSLTSKKLKSLHRATIFPSTHYVASKERKEIVIEDIKKELKERVKYFEKEGKLLEAQRIEQRTKYDIEMIQELGYCTGIENYSRLLSGRAPGYPPPTLIDYLPENALVIVDESHVTLPQFGGMYKGDLSRKSNLVNYGFRLPSALDNRPLKFNEFESLLPQTIYVSATPANYELEKSQNTVQQVIRPTGLLDPEVFVRPVAIQVEDALSEINKAIAKEERVLITTLTKKMVENLTEYLSEHGVNVRYLHSDIDTVERVQIIHDLRHGVFDVLVGINLLREGLDMPEVGVLLIFDADKEGFLRSEKSLIQTIGRVARNQNGRAILYADVVTKSMQKAMDETLRRRKLQDEYNQKHNIVPKTIIKNIDDMLDSSPEMQKRAYKNNLRLKVDDVDVSAILGMTEATKVIKALEKRMRAYAKELEFEKATTIRDKITEVKQKFINL.

Positions 25-413 (NGINTGLQHQ…QNTVQQVIRP (389 aa)) constitute a Helicase ATP-binding domain. 38 to 45 (GVTGSGKT) lines the ATP pocket. Residues 91 to 114 (YYDYYQPEAYIAASDTYIEKDSSV) carry the Beta-hairpin motif. Positions 429–595 (QVEDALSEIN…TIIKNIDDML (167 aa)) constitute a Helicase C-terminal domain. The UVR domain occupies 629 to 664 (TKVIKALEKRMRAYAKELEFEKATTIRDKITEVKQK).

The protein belongs to the UvrB family. In terms of assembly, forms a heterotetramer with UvrA during the search for lesions. Interacts with UvrC in an incision complex.

The protein resides in the cytoplasm. In terms of biological role, the UvrABC repair system catalyzes the recognition and processing of DNA lesions. A damage recognition complex composed of 2 UvrA and 2 UvrB subunits scans DNA for abnormalities. Upon binding of the UvrA(2)B(2) complex to a putative damaged site, the DNA wraps around one UvrB monomer. DNA wrap is dependent on ATP binding by UvrB and probably causes local melting of the DNA helix, facilitating insertion of UvrB beta-hairpin between the DNA strands. Then UvrB probes one DNA strand for the presence of a lesion. If a lesion is found the UvrA subunits dissociate and the UvrB-DNA preincision complex is formed. This complex is subsequently bound by UvrC and the second UvrB is released. If no lesion is found, the DNA wraps around the other UvrB subunit that will check the other stand for damage. This chain is UvrABC system protein B, found in Francisella tularensis subsp. tularensis (strain SCHU S4 / Schu 4).